Consider the following 42-residue polypeptide: MQYFKTYLSTAPVIATIWFGFLAGLLIEINRFFPDALVLPYL.

A helical transmembrane segment spans residues 7–27 (YLSTAPVIATIWFGFLAGLLI).

The protein belongs to the PsaJ family.

Its subcellular location is the plastid. The protein resides in the chloroplast thylakoid membrane. Functionally, may help in the organization of the PsaE and PsaF subunits. This chain is Photosystem I reaction center subunit IX, found in Chaetosphaeridium globosum (Charophycean green alga).